Reading from the N-terminus, the 363-residue chain is MKIKLILACALMVFSAASSAQRIKDIANVQGVRSNQLIGYGLVVGLPGTGEKTRYTEQTFKTMLKNFGINLPDNFRPKIKNVAVVAVSADMPAFIKPGQTLDVTVSSLGEAKSLRGGTLLQTFLKGVDGNVYAIAQGSMVVSGFSAEGLDGSKVIQNTPTVGRIPNGAIVERTVATPFSTGDHLTFNLRRADFSTAKRLADAINDLLGPGMARPLDAASVQVSAPRDVSQRVSFLATLENIEVEPASESAKVIVNSRTGTIVVGKDVRLLPAAVTHGGLTVTIAEATQVSQPNPLAGGDTVVTSDSTIDVSEADNRMFLFNPGTTLDELVRAVNLVGAAPSDVLAILEALKVAGALHGELIII.

The first 20 residues, Met-1–Ala-20, serve as a signal peptide directing secretion.

It belongs to the FlgI family. In terms of assembly, the basal body constitutes a major portion of the flagellar organelle and consists of four rings (L,P,S, and M) mounted on a central rod.

It is found in the periplasm. It localises to the bacterial flagellum basal body. Its function is as follows. Assembles around the rod to form the L-ring and probably protects the motor/basal body from shearing forces during rotation. The polypeptide is Flagellar P-ring protein (Shewanella loihica (strain ATCC BAA-1088 / PV-4)).